The primary structure comprises 431 residues: Protein cereblon (431 aa).

Positions 1-36 (MGNQLQLLPENEEEEEDDMETEDRDGEDVEKPSIIN) are disordered. Acidic residues predominate over residues 10-28 (ENEEEEEDDMETEDRDGED). The Lon N-terminal domain occupies 69 to 309 (LPVLPHVALI…CELDIMDRCT (241 aa)). The region spanning 308–416 (CTSLCCKQCQ…LTRSALLPTI (109 aa)) is the CULT domain. Zn(2+)-binding residues include Cys313 and Cys316. Positions 368, 370, and 376 each coordinate (S)-thalidomide. Residues Cys381 and Cys384 each coordinate Zn(2+).

It belongs to the CRBN family. Component of a DCX (DDB1-CUL4-X-box) protein ligase complex. In terms of tissue distribution, highly expressed in brain, head, vasculature otic vesicles and developing pectoral fins.

It is found in the cytoplasm. Its subcellular location is the nucleus. It participates in protein modification; protein ubiquitination. Substrate recognition component of a DCX (DDB1-CUL4-X-box) E3 protein ligase complex that mediates the ubiquitination and subsequent proteasomal degradation of target proteins, such as MEIS2. Normal degradation of key regulatory proteins is required for normal limb outgrowth and expression of the fibroblast growth factor FGF8. Maintains presynaptic glutamate release and consequently cognitive functions, such as memory and learning, by negatively regulating large-conductance calcium-activated potassium (BK) channels in excitatory neurons. Likely to function by regulating the assembly and neuronal surface expression of BK channels via its interaction with KCNT1. May also be involved in regulating anxiety-like behaviors via a BK channel-independent mechanism. This is Protein cereblon (crbn) from Danio rerio (Zebrafish).